We begin with the raw amino-acid sequence, 219 residues long: Leukocyte surface antigen CD53 (219 aa).

Topologically, residues 1–11 (MGMSSLKLLKY) are cytoplasmic. A helical membrane pass occupies residues 12–32 (VLFFFNLLFWICGCCILGFGI). Residues 33-54 (YLLIHNNFGVLFHNLPSLTLGN) lie on the Extracellular side of the membrane. A helical membrane pass occupies residues 55–69 (VFVIVGSIIMVVAFL). Residues 70 to 80 (GCMGSIKENKC) lie on the Cytoplasmic side of the membrane. A helical transmembrane segment spans residues 81-106 (LLMSFFILLLIILLAEVTLAILLFVY). Topologically, residues 107–181 (EQKLNEYVAK…AKARLWFHSN (75 aa)) are extracellular. 2 N-linked (GlcNAc...) asparagine glycosylation sites follow: asparagine 129 and asparagine 148. The helical transmembrane segment at 182-206 (FLYIGIITICVCVIEVLGMSFALTL) threads the bilayer. At 207–219 (NCQIDKTSQTIGL) the chain is on the cytoplasmic side.

It belongs to the tetraspanin (TM4SF) family. As to quaternary structure, interacts with SCIMP. Interacts with CD45/PTPRC. Interacts with IL7R. Interacts with RBL2 and PPP2CA. B-cells, monocytes, macrophages, neutrophils, single (CD4 or CD8) positive thymocytes and peripheral T-cells.

Its subcellular location is the cell membrane. It is found in the cell junction. It localises to the membrane. The protein resides in the synapse. Structural component of specialized membrane microdomains known as tetraspanin-enriched microdomains (TERMs), which act as platforms for receptor clustering and signaling. Participates thereby in diverse biological functions such as cell signal transduction, adhesion, migration and protein trafficking. Plays a role in the activation of monocytes and B-cells. Acts as an essential regulator of B-cell development by promoting interleukin-7 receptor/IL7R signaling. Also promotes, in B-cells, the BCR signaling by recruiting PKC to the plasma membrane in order to phosphorylate its substrates. Plays an essential role in B- and T-cells homing to lymph nodes by stabilizing L-selectin/SELL cell surface expression. Also mediates metabolic and inflammatory functions in hepatocytes and adipose tissue by promoting TNF-alpha and LPS signaling independent of the immune compartment. The protein is Leukocyte surface antigen CD53 (CD53) of Homo sapiens (Human).